A 183-amino-acid polypeptide reads, in one-letter code: uncharacterized protein (183 aa).

A compositionally biased stretch (low complexity) spans 105–149 (YNTNNSNTNTNYNNNNNNNNNNNNNNNNNNNKNNNNNNNNNNSNS). The segment at 105–151 (YNTNNSNTNTNYNNNNNNNNNNNNNNNNNNNKNNNNNNNNNNSNSKI) is disordered.

This is an uncharacterized protein from Dictyostelium discoideum (Social amoeba).